Consider the following 645-residue polypeptide: Threonine--tRNA ligase (645 aa).

Residues 1-61 (MPVITLPDGS…SDDAKLSIIT (61 aa)) enclose the TGS domain. The segment at 243-534 (DHRKLGKKLD…LIEDTEGAFP (292 aa)) is catalytic. Residues Cys334, His385, and His511 each coordinate Zn(2+).

It belongs to the class-II aminoacyl-tRNA synthetase family. As to quaternary structure, homodimer. Zn(2+) is required as a cofactor.

The protein resides in the cytoplasm. The catalysed reaction is tRNA(Thr) + L-threonine + ATP = L-threonyl-tRNA(Thr) + AMP + diphosphate + H(+). Catalyzes the attachment of threonine to tRNA(Thr) in a two-step reaction: L-threonine is first activated by ATP to form Thr-AMP and then transferred to the acceptor end of tRNA(Thr). Also edits incorrectly charged L-seryl-tRNA(Thr). This is Threonine--tRNA ligase from Marinomonas sp. (strain MWYL1).